An 856-amino-acid chain; its full sequence is Rod cGMP-specific 3',5'-cyclic phosphodiesterase subunit beta (856 aa).

Residue Ser-2 is modified to N-acetylserine. 2 consecutive GAF domains span residues 71–220 (NMER…TLNL) and 252–429 (DIER…GWSV). The PDEase domain maps to 481–814 (EEDELGILLK…KEWKALADEY (334 aa)). His-557 serves as the catalytic Proton donor. Positions 561, 597, 598, and 718 each coordinate a divalent metal cation. Over residues 823-833 (EEKQQQEDRTT) the composition is skewed to basic and acidic residues. The tract at residues 823–842 (EEKQQQEDRTTAKKAGTEIC) is disordered. Cys-853 carries the S-geranylgeranyl cysteine lipid modification. Positions 854-856 (CIL) are cleaved as a propeptide — removed in mature form.

This sequence belongs to the cyclic nucleotide phosphodiesterase family. Oligomer composed of two catalytic chains (alpha and beta), an inhibitory chain (gamma) and the delta chain. A divalent metal cation is required as a cofactor.

It is found in the membrane. The protein resides in the cell projection. It localises to the cilium. Its subcellular location is the photoreceptor outer segment. It catalyses the reaction 3',5'-cyclic GMP + H2O = GMP + H(+). In terms of biological role, rod-specific cGMP phosphodiesterase that catalyzes the hydrolysis of 3',5'-cyclic GMP. Necessary for the formation of a functional phosphodiesterase holoenzyme. Involved in retinal circadian rhythm photoentrainment via modulation of UVA and orange light-induced phase-shift of the retina clock. May participate in processes of transmission and amplification of the visual signal. This chain is Rod cGMP-specific 3',5'-cyclic phosphodiesterase subunit beta, found in Canis lupus familiaris (Dog).